We begin with the raw amino-acid sequence, 366 residues long: tRNA/tmRNA (uracil-C(5))-methyltransferase (366 aa).

5 residues coordinate S-adenosyl-L-methionine: Gln190, Tyr218, Asn223, Glu239, and Asp299. Cys324 acts as the Nucleophile in catalysis. Glu358 (proton acceptor) is an active-site residue.

The protein belongs to the class I-like SAM-binding methyltransferase superfamily. RNA M5U methyltransferase family. TrmA subfamily.

The catalysed reaction is uridine(54) in tRNA + S-adenosyl-L-methionine = 5-methyluridine(54) in tRNA + S-adenosyl-L-homocysteine + H(+). It catalyses the reaction uridine(341) in tmRNA + S-adenosyl-L-methionine = 5-methyluridine(341) in tmRNA + S-adenosyl-L-homocysteine + H(+). Its function is as follows. Dual-specificity methyltransferase that catalyzes the formation of 5-methyluridine at position 54 (m5U54) in all tRNAs, and that of position 341 (m5U341) in tmRNA (transfer-mRNA). The sequence is that of tRNA/tmRNA (uracil-C(5))-methyltransferase from Escherichia coli O81 (strain ED1a).